Reading from the N-terminus, the 76-residue chain is Candidate secreted effector protein MPL124497 (76 aa).

An N-terminal signal peptide occupies residues 1-21 (MKLIIFAAISVAFMSFDQVLG).

It belongs to the CPGH1 family.

It is found in the secreted. It localises to the host cell. Its subcellular location is the host cytoplasm. The protein resides in the host nucleus. Functionally, rust effector delivered into infected tissues to modulate host functions and contribute to pathogen virulence. Enhances leaf colonization by the bacteria Pseudomonas syringae and the oomycete Hyaloperonospora arabidopsidis pathogens in an Arabidopsis thaliana infection model. This chain is Candidate secreted effector protein MPL124497, found in Melampsora larici-populina (strain 98AG31 / pathotype 3-4-7) (Poplar leaf rust fungus).